We begin with the raw amino-acid sequence, 128 residues long: uncharacterized protein (128 aa).

The interval 1–26 (MNSATSETTTNTGAAETTTSTGAAET) is disordered. The helical transmembrane segment at 105–127 (IANGLLTNNGISVFISTVLLAIV) threads the bilayer.

This sequence belongs to the flocculin family.

The protein resides in the membrane. This is an uncharacterized protein from Saccharomyces cerevisiae (strain ATCC 204508 / S288c) (Baker's yeast).